The sequence spans 219 residues: Probable GTP-binding protein EngB (219 aa).

Residues 40–212 (LLPEIAFIGK…KASLAKCIIK (173 aa)) form the EngB-type G domain. GTP-binding positions include 48-55 (GKSNVGKS), 75-79 (GRTGQ), 93-96 (DLPG), 160-163 (TKFD), and 191-193 (VSS). Residues serine 55 and threonine 77 each contribute to the Mg(2+) site.

The protein belongs to the TRAFAC class TrmE-Era-EngA-EngB-Septin-like GTPase superfamily. EngB GTPase family. It depends on Mg(2+) as a cofactor.

Functionally, necessary for normal cell division and for the maintenance of normal septation. The chain is Probable GTP-binding protein EngB from Rickettsia canadensis (strain McKiel).